A 604-amino-acid chain; its full sequence is Siderophore iron transporter mirB (604 aa).

The tract at residues 1-61 (MTIGSKFSLL…DNSSDEALPS (61 aa)) is disordered. The next 14 helical transmembrane spans lie at 73-95 (AVTLVWSKWSLVAVFCLLWLVTL), 115-137 (FQSHSLLTVINIVSSAMVSALYI), 149-168 (AEGWLVMVGLSTLGLIMMAA), 178-200 (ADVFYSVGFAGMNYILCVLAADI), 207-224 (GIAFAFTSSPYMITAFAG), 237-259 (WRWGFGAFAIIFPFVASPVYFVL), 289-311 (YFFAFDIPGVILLAGGLTVFLLP), 326-343 (YIIAMIVTGFVVMVLFVL), 363-385 (TVLGACLIDATYQMSYYCWNSYF), 400-422 (AGYVGSTFQVVSGVLLFMVGFAI), 427-449 (YFRWLLFIGVPLYIFAQGLMIHF), 454-476 (QYIGYIVMCEIFISIGGSIFVLL), 489-511 (YVAAALAVLFISGGIGGAVGNAI), and 566-588 (AQARMLAAGTGLMALMFIWMFMV).

It belongs to the major facilitator superfamily.

The protein resides in the membrane. In terms of biological role, involved in the transport of siderophore triacestylfusarinine C and so has a role in iron homeostasis. In Emericella nidulans (strain FGSC A4 / ATCC 38163 / CBS 112.46 / NRRL 194 / M139) (Aspergillus nidulans), this protein is Siderophore iron transporter mirB (mirB).